Reading from the N-terminus, the 451-residue chain is MRECISIHVGQAGVQMGNSCWELYCLEHGIQPDGQMPSDKTVGVCNDSFNTFFTETGSGKHVPRAVFVDLEPSVIDEVRSGIYRQLFHPEQLISGKEDAANNYARGHYTIGKEYVDIVLDRIRKLADQCTGLQGFLIFRSFGGGTGSGFASLLMERLSVEYGKKSKLEIAIYPAPQSATSVVEPYNSILTTHTTLEHSDCCFMVDNEAIFDICQRNLDVSRPTYTNLNRLIGQIVSSITASLRFEGALNVDLTEFQTNLVPYPRIHFPLTTYSPIISAEKAYHEQLSVGEITSACFEPANQMVKCDPRHGKYMACCLLYRGDVVPKDVTASIANVKTKRTIQFVDWCPTGFKVGINYQPPTVVPGADLAKVSRAVCMLSNTTAIAEAWARLDHKVDLMYAKRAFVHWYVGEGMEERQFSEAREDLATLEKDYEEVGIDTADGEDDEEANDY.

Gln11 is a GTP binding site. Residue Lys40 is modified to N6-acetyllysine. The GTP site is built by Glu71, Ser140, Gly144, Thr145, Thr179, Asn206, and Asn228. A Mg(2+)-binding site is contributed by Glu71. The active site involves Glu254. The segment at 432-451 (YEEVGIDTADGEDDEEANDY) is disordered.

The protein belongs to the tubulin family. In terms of assembly, dimer of alpha and beta chains. A typical microtubule is a hollow water-filled tube with an outer diameter of 25 nm and an inner diameter of 15 nM. Alpha-beta heterodimers associate head-to-tail to form protofilaments running lengthwise along the microtubule wall with the beta-tubulin subunit facing the microtubule plus end conferring a structural polarity. Microtubules usually have 13 protofilaments but different protofilament numbers can be found in some organisms and specialized cells. It depends on Mg(2+) as a cofactor. Undergoes a tyrosination/detyrosination cycle, the cyclic removal and re-addition of a C-terminal tyrosine residue by the enzymes tubulin tyrosine carboxypeptidase (TTCP) and tubulin tyrosine ligase (TTL), respectively. Post-translationally, acetylation of alpha chains at Lys-40 stabilizes microtubules and affects affinity and processivity of microtubule motors. This modification has a role in multiple cellular functions, ranging from cell motility, cell cycle progression or cell differentiation to intracellular trafficking and signaling.

The protein resides in the cytoplasm. The protein localises to the cytoskeleton. It catalyses the reaction GTP + H2O = GDP + phosphate + H(+). Tubulin is the major constituent of microtubules, a cylinder consisting of laterally associated linear protofilaments composed of alpha- and beta-tubulin heterodimers. Microtubules grow by the addition of GTP-tubulin dimers to the microtubule end, where a stabilizing cap forms. Below the cap, tubulin dimers are in GDP-bound state, owing to GTPase activity of alpha-tubulin. The protein is Tubulin alpha-2 chain of Homarus americanus (American lobster).